A 305-amino-acid polypeptide reads, in one-letter code: Polyamine aminopropyltransferase 2 (305 aa).

One can recognise a PABS domain in the interval 7–242 (WRFVAEWTSE…GLWGFVAASD (236 aa)). S-methyl-5'-thioadenosine is bound at residue Gln36. Spermidine contacts are provided by His67 and Glu91. S-methyl-5'-thioadenosine contacts are provided by residues Asp111 and 143 to 144 (DG). Asp161 (proton acceptor) is an active-site residue. Pro170 serves as a coordination point for S-methyl-5'-thioadenosine.

Belongs to the spermidine/spermine synthase family. In terms of assembly, homodimer or homotetramer.

It localises to the cytoplasm. It carries out the reaction S-adenosyl 3-(methylsulfanyl)propylamine + propane-1,3-diamine = norspermidine + S-methyl-5'-thioadenosine + H(+). Involved in the biosynthesis of polyamines which are thought to support the growth of thermophilic microorganisms under high-temperature conditions. It seems that long-chain and branched-chain of polyamines effectively stabilize DNA and RNA, respectively. Catalyzes the irreversible transfer of a propylamine group from the amino donor S-adenosylmethioninamine (decarboxy-AdoMet) to 1,3-diaminopropane to yield sym-norspermidine (bis(3-aminopropyl)amine). It can also synthesize thermospermine from spermidine with a very low activity. The polypeptide is Polyamine aminopropyltransferase 2 (Hyperthermus butylicus (strain DSM 5456 / JCM 9403 / PLM1-5)).